The following is a 269-amino-acid chain: UPF0162 protein BUsg_167 (269 aa).

Belongs to the UPF0162 family.

This Buchnera aphidicola subsp. Schizaphis graminum (strain Sg) protein is UPF0162 protein BUsg_167.